A 243-amino-acid chain; its full sequence is Probable transcriptional regulatory protein BAPKO_0024/BafPKo_0025 (243 aa).

Belongs to the TACO1 family.

It localises to the cytoplasm. This chain is Probable transcriptional regulatory protein BAPKO_0024/BafPKo_0025, found in Borreliella afzelii (strain PKo) (Borrelia afzelii).